The sequence spans 358 residues: Protein RecA (358 aa).

66 to 73 (GPESSGKT) is a binding site for ATP.

This sequence belongs to the RecA family.

It localises to the cytoplasm. In terms of biological role, can catalyze the hydrolysis of ATP in the presence of single-stranded DNA, the ATP-dependent uptake of single-stranded DNA by duplex DNA, and the ATP-dependent hybridization of homologous single-stranded DNAs. It interacts with LexA causing its activation and leading to its autocatalytic cleavage. The polypeptide is Protein RecA (Herpetosiphon aurantiacus (strain ATCC 23779 / DSM 785 / 114-95)).